We begin with the raw amino-acid sequence, 377 residues long: Serine protease grass (377 aa).

The first 26 residues, 1–26, serve as a signal peptide directing secretion; that stretch reads MMIASSLAVLYGIAIVSSMGVQSARA. One can recognise a Clip domain in the interval 31-89; it reads DCTTPDGDQGQCMPFSSCRTIEERLTEAQKAGQKVPADYASYLQKALCGEFNGVRHFCC. 6 cysteine pairs are disulfide-bonded: Cys32–Cys88, Cys42–Cys78, Cys48–Cys89, Cys111–Cys243, Cys148–Cys164, and Cys188–Cys197. A linker region spans residues 91–118; that stretch reads SANIQHNSKVMSLFKDENFDCGNFLSQR. Residues 119-373 enclose the Peptidase S1 domain; the sequence is VSNGYEVKLS…YVQWITDTMA (255 aa). His163 (charge relay system) is an active-site residue. Glu179, Arg181, Thr184, and Asp187 together coordinate Ca(2+). Asp223 serves as the catalytic Charge relay system. 2 N-linked (GlcNAc...) asparagine glycosylation sites follow: Asn230 and Asn270. 2 disulfides stabilise this stretch: Cys290-Cys304 and Cys314-Cys349. The active-site Charge relay system is the Ser318.

It belongs to the peptidase S1 family. CLIP subfamily. Post-translationally, proteolytically cleaved by a tryspin-like protease which is likely to activate grass.

Its subcellular location is the secreted. Its function is as follows. Endopeptidase. Plays a key role in innate immunity by activating the Toll pathway in response to fungal and Gram-positive bacterial infections, presumably downstream of pattern-recognition receptors (PRR), such as PGRP-SA, GNBP1 and GNBP3, and upstream of spz processing enzyme SPE. The chain is Serine protease grass from Drosophila melanogaster (Fruit fly).